A 439-amino-acid polypeptide reads, in one-letter code: Glucan 1,3-beta-glucosidase (439 aa).

An N-terminal signal peptide occupies residues 1–18; that stretch reads MLLSLLFLLSTFAFGALT. The active-site Proton donor is glutamate 227. 2 cysteine pairs are disulfide-bonded: cysteine 311/cysteine 437 and cysteine 336/cysteine 366. The Nucleophile role is filled by glutamate 328.

This sequence belongs to the glycosyl hydrolase 5 (cellulase A) family.

The protein resides in the secreted. The enzyme catalyses Successive hydrolysis of beta-D-glucose units from the non-reducing ends of (1-&gt;3)-beta-D-glucans, releasing alpha-glucose.. In terms of biological role, beta-glucanases participate in the metabolism of beta-glucan, the main structural component of the cell wall. It could also function biosynthetically as a transglycosylase. The protein is Glucan 1,3-beta-glucosidase (EXG1) of Lachancea kluyveri (strain ATCC 58438 / CBS 3082 / BCRC 21498 / NBRC 1685 / JCM 7257 / NCYC 543 / NRRL Y-12651) (Yeast).